The chain runs to 1787 residues: ATP-dependent RNA helicase DEAH11, chloroplastic (1787 aa).

The N-terminal 33 residues, 1–33 (MRNSFPPSDGGRSTTDRRQQSFPSSSTNRYNSR), are a transit peptide targeting the chloroplast. Positions 1 to 75 (MRNSFPPSDG…DRAPSSGFSP (75 aa)) are disordered. Residues 20–60 (QSFPSSSTNRYNSRSAQSSPPLNHCTTWNQQHSQYHNTNFP) are compositionally biased toward polar residues. The region spanning 313–477 (LKKIHCEQIM…LFDCGILHVN (165 aa)) is the Helicase ATP-binding domain. 326–333 (GETGSGKS) contacts ATP. The DEAH box motif lies at 424 to 427 (DEAH). One can recognise a Helicase C-terminal domain in the interval 507–673 (DVVKMAVEIH…VALLRMLALG (167 aa)). Residues 1557 to 1764 (IELECPICLS…EPCYAHLRTI (208 aa)) are TRIAD supradomain. Residues cysteine 1561, cysteine 1564, cysteine 1577, histidine 1579, cysteine 1582, cysteine 1585, cysteine 1604, cysteine 1609, cysteine 1649, cysteine 1654, cysteine 1672, cysteine 1675, cysteine 1680, cysteine 1683, histidine 1688, cysteine 1693, cysteine 1719, and cysteine 1722 each contribute to the Zn(2+) site. Residues 1561 to 1609 (CPICLSEVDDGYSLEGCSHLFCKACLLEQFEASMRNFDAFPILCSHIDC) form an RING-type 1 zinc finger. Residues 1628–1693 (DELISASLSA…HLEYHPLITC (66 aa)) form an IBR-type zinc finger. The RING-type 2; atypical zinc finger occupies 1719 to 1747 (CPICKSTIEKTDGCNHLQCRCGKHICWTC). The active site involves cysteine 1732. Residues cysteine 1737 and cysteine 1739 each contribute to the Zn(2+) site.

Belongs to the DEAD box helicase family. DEAH subfamily.

The protein resides in the plastid. It is found in the chloroplast. It carries out the reaction ATP + H2O = ADP + phosphate + H(+). The protein is ATP-dependent RNA helicase DEAH11, chloroplastic of Arabidopsis thaliana (Mouse-ear cress).